A 520-amino-acid polypeptide reads, in one-letter code: Ribonuclease Y (520 aa).

The chain crosses the membrane as a helical span at residues 5-25; sequence ITIISSLLFLIVGLVVGSLIF. Residues 76–127 form a disordered region; the sequence is ELRGRRTETQKAENRLLQREENLDRKDTSLSKREATLERKEESISKRQQQIE. In terms of domain architecture, KH spans 210-273; it reads TVSVVTLPND…EIARIALEKL (64 aa). The region spanning 336–429 is the HD domain; sequence VLNHSLEVSK…VAAADALSAA (94 aa).

This sequence belongs to the RNase Y family.

The protein resides in the cell membrane. Functionally, endoribonuclease that initiates mRNA decay. In Listeria monocytogenes serotype 1/2a (strain 10403S), this protein is Ribonuclease Y.